Reading from the N-terminus, the 171-residue chain is Endoribonuclease YbeY (171 aa).

His126, His130, and His136 together coordinate Zn(2+).

It belongs to the endoribonuclease YbeY family. Zn(2+) serves as cofactor.

It is found in the cytoplasm. Its function is as follows. Single strand-specific metallo-endoribonuclease involved in late-stage 70S ribosome quality control and in maturation of the 3' terminus of the 16S rRNA. The chain is Endoribonuclease YbeY from Rhizobium johnstonii (strain DSM 114642 / LMG 32736 / 3841) (Rhizobium leguminosarum bv. viciae).